The chain runs to 452 residues: Phosphoglucosamine mutase 2 (452 aa).

Residue Ser101 is the Phosphoserine intermediate of the active site. Residues Ser101, Asp245, Asp247, and Asp249 each coordinate Mg(2+). Ser101 carries the post-translational modification Phosphoserine.

It belongs to the phosphohexose mutase family. Requires Mg(2+) as cofactor. In terms of processing, activated by phosphorylation.

The catalysed reaction is alpha-D-glucosamine 1-phosphate = D-glucosamine 6-phosphate. Functionally, catalyzes the conversion of glucosamine-6-phosphate to glucosamine-1-phosphate. This is Phosphoglucosamine mutase 2 from Shewanella amazonensis (strain ATCC BAA-1098 / SB2B).